The primary structure comprises 451 residues: Uronate isomerase (451 aa).

This sequence belongs to the metallo-dependent hydrolases superfamily. Uronate isomerase family.

The enzyme catalyses D-glucuronate = D-fructuronate. It carries out the reaction aldehydo-D-galacturonate = keto-D-tagaturonate. Its pathway is carbohydrate metabolism; pentose and glucuronate interconversion. This Thermotoga sp. (strain RQ2) protein is Uronate isomerase.